Reading from the N-terminus, the 161-residue chain is Nucleotide-binding protein Vapar_3769 (161 aa).

The protein belongs to the YajQ family.

In terms of biological role, nucleotide-binding protein. This is Nucleotide-binding protein Vapar_3769 from Variovorax paradoxus (strain S110).